Consider the following 58-residue polypeptide: Large ribosomal subunit protein uL30 (58 aa).

The protein belongs to the universal ribosomal protein uL30 family. In terms of assembly, part of the 50S ribosomal subunit.

The polypeptide is Large ribosomal subunit protein uL30 (Acinetobacter baumannii (strain AB307-0294)).